Reading from the N-terminus, the 210-residue chain is Large ribosomal subunit protein uL3 (210 aa).

Residues 125 to 151 (RHGQSRGPMSHGSRYHRRPGSMGPVAP) are disordered.

It belongs to the universal ribosomal protein uL3 family. As to quaternary structure, part of the 50S ribosomal subunit. Forms a cluster with proteins L14 and L19.

Functionally, one of the primary rRNA binding proteins, it binds directly near the 3'-end of the 23S rRNA, where it nucleates assembly of the 50S subunit. The protein is Large ribosomal subunit protein uL3 of Bacillus cereus (strain ATCC 14579 / DSM 31 / CCUG 7414 / JCM 2152 / NBRC 15305 / NCIMB 9373 / NCTC 2599 / NRRL B-3711).